Consider the following 347-residue polypeptide: Ribosomal RNA small subunit methyltransferase C (347 aa).

This sequence belongs to the methyltransferase superfamily. RsmC family. Monomer.

It localises to the cytoplasm. The catalysed reaction is guanosine(1207) in 16S rRNA + S-adenosyl-L-methionine = N(2)-methylguanosine(1207) in 16S rRNA + S-adenosyl-L-homocysteine + H(+). In terms of biological role, specifically methylates the guanine in position 1207 of 16S rRNA in the 30S particle. This Yersinia pseudotuberculosis serotype IB (strain PB1/+) protein is Ribosomal RNA small subunit methyltransferase C.